A 349-amino-acid chain; its full sequence is Ribosomal RNA small subunit methyltransferase H 2 (349 aa).

Residues 80–82 (GGH), aspartate 100, phenylalanine 130, aspartate 149, and glutamine 156 each bind S-adenosyl-L-methionine.

The protein belongs to the methyltransferase superfamily. RsmH family.

The protein resides in the cytoplasm. It carries out the reaction cytidine(1402) in 16S rRNA + S-adenosyl-L-methionine = N(4)-methylcytidine(1402) in 16S rRNA + S-adenosyl-L-homocysteine + H(+). Functionally, specifically methylates the N4 position of cytidine in position 1402 (C1402) of 16S rRNA. The chain is Ribosomal RNA small subunit methyltransferase H 2 from Alkaliphilus metalliredigens (strain QYMF).